We begin with the raw amino-acid sequence, 318 residues long: 2,4-dinitroanisole O-demethylase subunit beta (318 aa).

The protein belongs to the metallo-beta-lactamase superfamily. In terms of assembly, part of the complex DnhAB composed of the 2,4-dinitroanisole O-demethylase alpha (DnhA) and beta (DnhB) subunits.

It catalyses the reaction 2,4-dinitroanisole + H2O = 2,4-dinitrophenol + methanol + H(+). Functionally, involved in the degradation of 2,4-dinitroanisole (DNAN), an insensitive munition ingredient used in explosive formulations as a replacement for 2,4,6-trinitrotoluene (TNT). Catalyzes the removal of the methyl group from 2,4-dinitroanisole (DNAN) to yield 2,4-dinitrophenol (2,4-DNP) and methanol. This chain is 2,4-dinitroanisole O-demethylase subunit beta, found in Nocardioides sp. (strain JS1661).